The primary structure comprises 218 residues: Uracil-DNA glycosylase (218 aa).

The active-site Proton acceptor is D68.

This sequence belongs to the uracil-DNA glycosylase (UDG) superfamily. UNG family. Homodimer. Interacts with protein OPG148. Component of the Uracil-DNA glycosylase(UDG)-OPG148-polymerase complex; OPG148 and UDG form a heterodimeric processivity factor that associates with OPG71 to form the processive polymerase holoenzyme.

It carries out the reaction Hydrolyzes single-stranded DNA or mismatched double-stranded DNA and polynucleotides, releasing free uracil.. Functionally, plays an essential role in viral replication as a component of the DNA polymerase processivity factor. Excises uracil residues from the DNA which can arise as a result of misincorporation of dUMP residues by DNA polymerase or due to deamination of cytosine. The chain is Uracil-DNA glycosylase (OPG116) from Bos taurus (Bovine).